The chain runs to 170 residues: MPRSRINGNFIDKTFSIVANILLRIIPTTSGEKRAFTYYRDGMLAQSEGNYAEALQNYYEAMRLEIDPYDRSYILYNIGLIHTSNGEHTKALEYYFRALERNPFLPQAFNNMAVICHYRGEQAILQGDSEIAEAWFDQAAEYWKQAIALTPGNYIEAQNWLKITKRFEFE.

3 TPR repeats span residues 35 to 68, 72 to 105, and 120 to 153; these read AFTY…EIDP, SYIL…NPFL, and GEQA…TPGN.

It belongs to the Ycf3 family.

Its subcellular location is the plastid. It localises to the chloroplast thylakoid membrane. Its function is as follows. Essential for the assembly of the photosystem I (PSI) complex. May act as a chaperone-like factor to guide the assembly of the PSI subunits. The polypeptide is Photosystem I assembly protein Ycf3 (Oryza sativa (Rice)).